The sequence spans 704 residues: DNA ligase (704 aa).

Residues aspartate 44–aspartate 48, serine 93–isoleucine 94, and glutamate 125 contribute to the NAD(+) site. Lysine 127 functions as the N6-AMP-lysine intermediate in the catalytic mechanism. Positions 148, 184, 300, and 324 each coordinate NAD(+). Zn(2+) is bound by residues cysteine 418, cysteine 421, cysteine 436, and cysteine 442. Residues isoleucine 625–lysine 704 form the BRCT domain.

Belongs to the NAD-dependent DNA ligase family. LigA subfamily. Mg(2+) serves as cofactor. It depends on Mn(2+) as a cofactor.

It catalyses the reaction NAD(+) + (deoxyribonucleotide)n-3'-hydroxyl + 5'-phospho-(deoxyribonucleotide)m = (deoxyribonucleotide)n+m + AMP + beta-nicotinamide D-nucleotide.. Functionally, DNA ligase that catalyzes the formation of phosphodiester linkages between 5'-phosphoryl and 3'-hydroxyl groups in double-stranded DNA using NAD as a coenzyme and as the energy source for the reaction. It is essential for DNA replication and repair of damaged DNA. This chain is DNA ligase, found in Pelobacter propionicus (strain DSM 2379 / NBRC 103807 / OttBd1).